A 79-amino-acid polypeptide reads, in one-letter code: Conotoxin Kt6.1 (79 aa).

Residues 1 to 22 (MKLTCVLIISVLFLTASQLITA) form the signal peptide. The propeptide occupies 23-47 (VYSRDKQQYRAARLRDEMRNLKGAR). 3 disulfide bridges follow: cysteine 49–cysteine 62, cysteine 56–cysteine 67, and cysteine 61–cysteine 77. 4-hydroxyproline is present on residues proline 60 and proline 63.

Belongs to the conotoxin O1 superfamily. As to expression, expressed by the venom duct.

The protein localises to the secreted. Ion channel inhibitor that inhibits the increase in intracellular calcium upon depolarization in DRG neurons. In vivo, both intraperitoneal and intracranial injections into mice induce hyperactivity. The polypeptide is Conotoxin Kt6.1 (Conus kintoki (Cone snail)).